Here is a 396-residue protein sequence, read N- to C-terminus: Phosphopentomutase (396 aa).

Residues Asp14, Asp286, His291, Asp327, His328, and His339 each coordinate Mn(2+).

The protein belongs to the phosphopentomutase family. Mn(2+) is required as a cofactor.

The protein localises to the cytoplasm. It catalyses the reaction 2-deoxy-alpha-D-ribose 1-phosphate = 2-deoxy-D-ribose 5-phosphate. The enzyme catalyses alpha-D-ribose 1-phosphate = D-ribose 5-phosphate. It participates in carbohydrate degradation; 2-deoxy-D-ribose 1-phosphate degradation; D-glyceraldehyde 3-phosphate and acetaldehyde from 2-deoxy-alpha-D-ribose 1-phosphate: step 1/2. Isomerase that catalyzes the conversion of deoxy-ribose 1-phosphate (dRib-1-P) and ribose 1-phosphate (Rib-1-P) to deoxy-ribose 5-phosphate (dRib-5-P) and ribose 5-phosphate (Rib-5-P), respectively. The polypeptide is Phosphopentomutase (Staphylococcus epidermidis (strain ATCC 35984 / DSM 28319 / BCRC 17069 / CCUG 31568 / BM 3577 / RP62A)).